The primary structure comprises 520 residues: Laccase-1 (520 aa).

The first 19 residues, 1–19 (MRLSNALVLVAACISSVVA), serve as a signal peptide directing secretion. 3 Plastocyanin-like domains span residues 21–145 (TRTF…FIVY), 157–305 (VDDE…LTLA), and 375–488 (TVPV…FAEA). Residues H82 and H84 each coordinate Cu cation. 2 cysteine pairs are disulfide-bonded: C103/C509 and C135/C229. N-linked (GlcNAc...) asparagine glycosylation is present at N108. 2 residues coordinate Cu cation: H127 and H129. N-linked (GlcNAc...) asparagine glycans are attached at residues N239 and N299. Cu cation is bound by residues H417, H420, H422, H470, C471, H472, and H476. N492 is a glycosylation site (N-linked (GlcNAc...) asparagine).

Belongs to the multicopper oxidase family. The cofactor is Cu cation.

The protein localises to the secreted. The enzyme catalyses 4 hydroquinone + O2 = 4 benzosemiquinone + 2 H2O. Functionally, lignin degradation and detoxification of lignin-derived products. In Agaricus bisporus (White button mushroom), this protein is Laccase-1 (lcc1).